The sequence spans 88 residues: LYR motif-containing protein 2 (88 aa).

A mitochondrion-targeting transit peptide spans M1–R19.

It belongs to the complex I LYR family.

The protein resides in the mitochondrion. Its function is as follows. Involved in efficient integration of the N-module into mitochondrial respiratory chain complex I. The protein is LYR motif-containing protein 2 (lyrm2) of Danio rerio (Zebrafish).